An 89-amino-acid chain; its full sequence is MAEEEIDYNSQPCHAYACRIQDCLQRSGYNESKCTKLIDELYECCAKFYMSKGEDARSTSCPKPNLLKLKIQQRESKDVDAVLLEFAKK.

Residues 10–52 form the CHCH domain; the sequence is SQPCHAYACRIQDCLQRSGYNESKCTKLIDELYECCAKFYMSK. 2 consecutive short sequence motifs (cx9C motif) follow at residues 13–23 and 34–44; these read CHAYACRIQDC and CTKLIDELYEC. 2 disulfides stabilise this stretch: cysteine 13/cysteine 44 and cysteine 23/cysteine 34.

This sequence belongs to the CMC4 family.

It is found in the mitochondrion intermembrane space. The polypeptide is Cx9C motif-containing protein 4, mitochondrial (CMC4) (Yarrowia lipolytica (strain CLIB 122 / E 150) (Yeast)).